The following is a 475-amino-acid chain: MQQETGIHPIVQCDPIAAIATPLGVGALAVVRISGATAFDIAGRVFRKARDPHQPLSETPGYTAHFGRLYDGLTLIDEVIALVFRSPSSFTAEDMVEFTCHGGPVVTRHVLQLLLDNGCRLAEPGEFTRRAFLNGKIDLLQAEAIGEMIHARSESAYRTAVIQMKGDLSATLGALREKLLRSCALLELELDFSEEDVEFQSREELRVEIASLQSEVARLVDSYQHGRLLTEGVATVIAGRPNAGKSTLLNTLLGEERAIVSHMPGTTRDYIEECFIHDKTMFRLTDTAGLRETGEEIEHEGVRRSRMKMAEADLLLYLLDLSREGMAEEIKEIVALKAAHASSKFLVVANKIDLVPDATTLLCRLGEEAGCEAIGISARQKLGIDELKSRMSSMVEGLDKLHEASVLVTSLRHYEALRNAGDALRNAQNLLDEQADTELIAFELRAALDYVGEITGKVVNEEILHAIFERFCIGK.

Residues R32, E97, and K136 each coordinate (6S)-5-formyl-5,6,7,8-tetrahydrofolate. A TrmE-type G domain is found at 232 to 396; it reads GVATVIAGRP…LKSRMSSMVE (165 aa). Residues 242 to 247, 261 to 267, 286 to 289, and 377 to 379 each bind GTP; these read NAGKST, SHMPGTT, DTAG, and SAR. Residues S246 and T267 each coordinate Mg(2+). A (6S)-5-formyl-5,6,7,8-tetrahydrofolate-binding site is contributed by K475.

Belongs to the TRAFAC class TrmE-Era-EngA-EngB-Septin-like GTPase superfamily. TrmE GTPase family. In terms of assembly, homodimer. Heterotetramer of two MnmE and two MnmG subunits. K(+) serves as cofactor.

The protein resides in the cytoplasm. Functionally, exhibits a very high intrinsic GTPase hydrolysis rate. Involved in the addition of a carboxymethylaminomethyl (cmnm) group at the wobble position (U34) of certain tRNAs, forming tRNA-cmnm(5)s(2)U34. The polypeptide is tRNA modification GTPase MnmE (Chlorobium phaeobacteroides (strain DSM 266 / SMG 266 / 2430)).